The chain runs to 810 residues: MQFPESWLRTFVDPQLTTDELSHALTMAGLEVESLRPAAPPTEKIVVGRVLEVVKHPDADKLNVCQVDAGTGATLQIVCGAPNVAPGIKVPVALVGAKLPPAEEGGAPFAIKLSKLRGVESQGMLCSARELKLSEDHSGLMILPEGTPVGQDIREALNLDDTVFEIKLTPNKADCLSVFGIARETAAITGAPLAAPDIRPVLAELTETLPVKISAPDLCGRFSGRVIRGVNARAKTPHWMVERLERAGQRSVSALVDISNYVMFELGRPSHVFDLDKIHGGIDVRWGKRGESLKLLNGNTIELDETVGVISDGAQVESLAGIMGGDSTAVTLDTTNIYLEAAFWWPDSIRGRARKYNFSTDAAHRFERGVDYSTTVEHVERITQLILDICGGQAGPVDDQIVNLPQRAPVSMRASRANRIIGVEIGEDEIAQIFTRLGLAFERDGDVFRVTPPPHRFDIEIEEDLIEEVARIYGFEKIPARPPVAKSEMRATDETRRSVHAIRHALAARDYAETVNFSFVDAEWERDFAGNDNPVRLLNPIASQLSVMRTTLFGSLVGVLRHNLNRRAERVRVFEAGRVFVADPSVKAGELAVEGYAQPKRIGALAYGPVVEEQWGTATRQVDYFDVKGDLEALLAPVPARFVKAEHPALHPGRSARIEVDGHAVGWIGELHPRLMQKYELPHAPVMFEIDTDALVARALPAPSEVSKFPPVRRDIAVVVDQKVEVQALFDEMKKALADDACKFVQRVALFDEFRAKSNTSGGLSAHEKSLAFRVTLQDAAGTLQDETVDQAIQTLVDRMARVYGARLRG.

One can recognise a tRNA-binding domain in the interval 39–154; that stretch reads APPTEKIVVG…EGTPVGQDIR (116 aa). Residues 405–480 enclose the B5 domain; the sequence is PQRAPVSMRA…RIYGFEKIPA (76 aa). Mg(2+) contacts are provided by aspartate 458, aspartate 464, glutamate 467, and glutamate 468. An FDX-ACB domain is found at 707–809; the sequence is SKFPPVRRDI…MARVYGARLR (103 aa).

This sequence belongs to the phenylalanyl-tRNA synthetase beta subunit family. Type 1 subfamily. In terms of assembly, tetramer of two alpha and two beta subunits. It depends on Mg(2+) as a cofactor.

The protein resides in the cytoplasm. It catalyses the reaction tRNA(Phe) + L-phenylalanine + ATP = L-phenylalanyl-tRNA(Phe) + AMP + diphosphate + H(+). This chain is Phenylalanine--tRNA ligase beta subunit, found in Burkholderia pseudomallei (strain 1710b).